The sequence spans 313 residues: GDP-D-glycero-alpha-D-manno-heptose dehydrogenase (313 aa).

Residues Tyr13–Ile14, Asp33–Gln39, Phe37, Asp57–Ala58, Leu77, and Tyr144–Lys148 contribute to the NADH site. Thr168 lines the GDP pocket. NADH is bound by residues Val169 and Arg175–Arg177. GDP-binding positions include Asp179–Asp184, Val196–Phe198, Arg204, Lys242, and Arg270. Residue Asn311 coordinates NADH.

Homotetramer. Requires NAD(+) as cofactor.

The enzyme catalyses GDP-D-glycero-alpha-D-manno-heptose + 2-oxoglutarate = GDP-D-glycero-4-keto-alpha-D-lyxo-heptose + (S)-2-hydroxyglutarate. It participates in capsule biogenesis; capsule polysaccharide biosynthesis. NAD-dependent dehydrogenase involved in the biosynthesis of heptose moieties with a hydroxyl group at C6 found on the capsular polysaccharide (CPS) of C.jejuni. Catalyzes the initial oxidation of C4 of the GDP-D-glycero-alpha-D-manno-heptose to form GDP-D-glycero-4-keto-alpha-D-lyxo-heptose in the presence of alpha-ketoglutarate required to recycle the NADH nucleotide. In Campylobacter jejuni subsp. jejuni serotype O:2 (strain ATCC 700819 / NCTC 11168), this protein is GDP-D-glycero-alpha-D-manno-heptose dehydrogenase.